Reading from the N-terminus, the 355-residue chain is N-acetyl-gamma-glutamyl-phosphate reductase (355 aa).

The active site involves cysteine 152.

Belongs to the NAGSA dehydrogenase family. Type 1 subfamily.

The protein resides in the cytoplasm. It catalyses the reaction N-acetyl-L-glutamate 5-semialdehyde + phosphate + NADP(+) = N-acetyl-L-glutamyl 5-phosphate + NADPH + H(+). It functions in the pathway amino-acid biosynthesis; L-arginine biosynthesis; N(2)-acetyl-L-ornithine from L-glutamate: step 3/4. In terms of biological role, catalyzes the NADPH-dependent reduction of N-acetyl-5-glutamyl phosphate to yield N-acetyl-L-glutamate 5-semialdehyde. In Psychrobacter arcticus (strain DSM 17307 / VKM B-2377 / 273-4), this protein is N-acetyl-gamma-glutamyl-phosphate reductase.